We begin with the raw amino-acid sequence, 399 residues long: Phosphoglycerate kinase (399 aa).

Residues 21–23 (DFN), arginine 37, 60–63 (HLGR), arginine 119, and arginine 152 each bind substrate. Residues lysine 205, glycine 296, glutamate 327, and 353 to 356 (GGDT) contribute to the ATP site.

This sequence belongs to the phosphoglycerate kinase family. In terms of assembly, monomer.

It localises to the cytoplasm. The enzyme catalyses (2R)-3-phosphoglycerate + ATP = (2R)-3-phospho-glyceroyl phosphate + ADP. The protein operates within carbohydrate degradation; glycolysis; pyruvate from D-glyceraldehyde 3-phosphate: step 2/5. This is Phosphoglycerate kinase from Sulfurimonas denitrificans (strain ATCC 33889 / DSM 1251) (Thiomicrospira denitrificans (strain ATCC 33889 / DSM 1251)).